Reading from the N-terminus, the 96-residue chain is Putative pterin-4-alpha-carbinolamine dehydratase (96 aa).

The protein belongs to the pterin-4-alpha-carbinolamine dehydratase family.

It catalyses the reaction (4aS,6R)-4a-hydroxy-L-erythro-5,6,7,8-tetrahydrobiopterin = (6R)-L-erythro-6,7-dihydrobiopterin + H2O. This chain is Putative pterin-4-alpha-carbinolamine dehydratase, found in Prochlorococcus marinus (strain MIT 9313).